The following is a 1055-amino-acid chain: DNA-directed RNA polymerase subunit beta' (1055 aa).

Cysteine 60, cysteine 62, cysteine 75, and cysteine 78 together coordinate Zn(2+). 3 residues coordinate Mg(2+): aspartate 449, aspartate 451, and aspartate 453. Residues cysteine 818, cysteine 892, cysteine 899, and cysteine 902 each contribute to the Zn(2+) site.

This sequence belongs to the RNA polymerase beta' chain family. In terms of assembly, the RNAP catalytic core consists of 2 alpha, 1 beta, 1 beta' and 1 omega subunit. When a sigma factor is associated with the core the holoenzyme is formed, which can initiate transcription. Mg(2+) serves as cofactor. Requires Zn(2+) as cofactor.

The enzyme catalyses RNA(n) + a ribonucleoside 5'-triphosphate = RNA(n+1) + diphosphate. Its function is as follows. DNA-dependent RNA polymerase catalyzes the transcription of DNA into RNA using the four ribonucleoside triphosphates as substrates. This Pediococcus acidilactici protein is DNA-directed RNA polymerase subunit beta'.